A 211-amino-acid polypeptide reads, in one-letter code: Protein DEHYDRATION-INDUCED 19 homolog 7 (211 aa).

Residue Thr-113 is modified to Phosphothreonine. Residues Gly-163 to Lys-194 form a disordered region. Over residues Ala-167–Asn-186 the composition is skewed to polar residues.

This sequence belongs to the Di19 family. Not phosphorylated in vitro by CPK3 or CPK11. In terms of tissue distribution, expressed in seedlings, roots, leaves, stems, flowers and siliques.

It localises to the nucleus. Functionally, involved in both red and blue light signaling. The polypeptide is Protein DEHYDRATION-INDUCED 19 homolog 7 (DI19-7) (Arabidopsis thaliana (Mouse-ear cress)).